The chain runs to 231 residues: U1 small nuclear ribonucleoprotein C (231 aa).

The segment at 4–36 (YYCEYCHSYLTHDTLSVRKSHLVGKNHLRITAD) adopts a Matrin-type zinc-finger fold. The segment covering 49 to 61 (HNHKRRHIGKRGR) has biased composition (basic residues). Disordered stretches follow at residues 49-71 (HNHK…SQNE), 137-177 (PQRA…LEPP), and 205-231 (ESKK…RYGN).

The protein belongs to the U1 small nuclear ribonucleoprotein C family. As to quaternary structure, U1 snRNP is composed of the 7 core Sm proteins SMB1, SMD1, SMD2, SMD3, SME1, SMX3 and SMX2 (Sm proteins B, D1, D2, D3, E, F and G, respectively) that assemble in a heptameric protein ring on the Sm site of the small nuclear RNA to form the core snRNP, and at least 10 U1 snRNP-specific proteins SNP1/U1-70K, MUD1/U1-A, YHC1/U1-C, LUC7, NAM8, PRP39, PRP40, PRP42, SNU56 and SNU71. YHC1/U1-C interacts with U1 snRNA and the 5' splice-site region of the pre-mRNA.

The protein resides in the nucleus. Component of the spliceosomal U1 snRNP, which is essential for recognition of the pre-mRNA 5' splice-site and the subsequent assembly of the spliceosome. YHC1/U1-C is directly involved in initial 5' splice-site recognition for both constitutive and regulated alternative splicing. The interaction with the 5' splice-site seems to precede base-pairing between the pre-mRNA and the U1 snRNA. Stimulates commitment or early (E) complex formation by stabilizing the base pairing of the 5' end of the U1 snRNA and the 5' splice-site region. The polypeptide is U1 small nuclear ribonucleoprotein C (Saccharomyces cerevisiae (strain ATCC 204508 / S288c) (Baker's yeast)).